Reading from the N-terminus, the 294-residue chain is Metallophosphoesterase MPPED2 (294 aa).

The Mn(2+) site is built by Asp65, His67, Asp86, Asn117, and His213. A GMP-binding site is contributed by Asn117–His118. GMP contacts are provided by residues Lys225 to Glu226 and His254 to Glu255. Residue His254 participates in Mn(2+) binding.

Belongs to the UPF0046 family. In terms of assembly, homodimer. Mn(2+) is required as a cofactor. It depends on Co(2+) as a cofactor. As to expression, expressed in fetal brain (at protein level). detected in fetal and adult brain.

Inhibited by nmolar levels of AMP and GMP. In terms of biological role, displays low metallophosphoesterase activity (in vitro). May play a role in the development of the nervous system. The polypeptide is Metallophosphoesterase MPPED2 (Mpped2) (Rattus norvegicus (Rat)).